The sequence spans 154 residues: Troponin C, isoallergen Bla g 6.0301 (154 aa).

EF-hand domains lie at 11-46 (EQIS…MGQP), 47-82 (FNRR…FIIE), 87-122 (AMEK…LDEQ), and 123-154 (LTSD…MMTG). 5 residues coordinate Ca(2+): aspartate 60, aspartate 62, serine 64, arginine 66, and glutamate 71. The Ca(2+) site is built by aspartate 136, aspartate 138, serine 140, threonine 142, and glutamate 147.

It belongs to the troponin C family.

Troponin is the central regulatory protein of striated muscle contraction. It consists of three components: Troponin-I (Tn-I) which is the inhibitor of actomyosin ATPase, Troponin-T (Tn-T) which contains the binding site for tropomyosin and Troponin-C (Tn-C). The binding of calcium to Tn-C abolishes the inhibitory action of Tn on actin filaments. The polypeptide is Troponin C, isoallergen Bla g 6.0301 (Blattella germanica (German cockroach)).